The primary structure comprises 114 residues: Large ribosomal subunit protein bL20c (114 aa).

It belongs to the bacterial ribosomal protein bL20 family.

The protein resides in the plastid. Its subcellular location is the chloroplast. Its function is as follows. Binds directly to 23S ribosomal RNA and is necessary for the in vitro assembly process of the 50S ribosomal subunit. It is not involved in the protein synthesizing functions of that subunit. The chain is Large ribosomal subunit protein bL20c from Tetradesmus obliquus (Green alga).